The primary structure comprises 692 residues: Elongation factor G (692 aa).

The tr-type G domain occupies proline 8–valine 282. Residues alanine 17 to threonine 24, aspartate 81 to histidine 85, and asparagine 135 to aspartate 138 contribute to the GTP site.

The protein belongs to the TRAFAC class translation factor GTPase superfamily. Classic translation factor GTPase family. EF-G/EF-2 subfamily.

The protein resides in the cytoplasm. Catalyzes the GTP-dependent ribosomal translocation step during translation elongation. During this step, the ribosome changes from the pre-translocational (PRE) to the post-translocational (POST) state as the newly formed A-site-bound peptidyl-tRNA and P-site-bound deacylated tRNA move to the P and E sites, respectively. Catalyzes the coordinated movement of the two tRNA molecules, the mRNA and conformational changes in the ribosome. This chain is Elongation factor G, found in Brevibacillus brevis (strain 47 / JCM 6285 / NBRC 100599).